A 215-amino-acid polypeptide reads, in one-letter code: 3-demethoxyubiquinol 3-hydroxylase (215 aa).

6 residues coordinate Fe cation: E64, E94, H97, E146, E178, and H181.

Belongs to the COQ7 family. The cofactor is Fe cation.

It is found in the cell membrane. The catalysed reaction is a 5-methoxy-2-methyl-3-(all-trans-polyprenyl)benzene-1,4-diol + AH2 + O2 = a 3-demethylubiquinol + A + H2O. It participates in cofactor biosynthesis; ubiquinone biosynthesis. In terms of biological role, catalyzes the hydroxylation of 2-nonaprenyl-3-methyl-6-methoxy-1,4-benzoquinol during ubiquinone biosynthesis. The polypeptide is 3-demethoxyubiquinol 3-hydroxylase (Coxiella burnetii (strain Dugway 5J108-111)).